The chain runs to 491 residues: MASFQIHQDMSNKENPGIKIPAGVKNTKQPLAVIGGKAEKNALAPRANFAVLNGNNNVPRPAGKVQVFRDVRNLNVDENVEYGAKKSNVVPVVEQFKTFSVYEDNNDTQVAPSGKSLASLVDKENHDVKFGAGQKELVDYDLDSTPMSVTDVQSPMSVDRSILGVIQSSDISVGTETGVSPTGRVKELPPRNDRQRFLEVVQYQMDILEYFRESEKKHRPKPLYMRRQKDISHNMRSILIDWLVEVSEEYKLDTETLYLSVFYLDRFLSQMAVVRSKLQLVGTAAMYIAAKYEEIYPPEVGEFVFLTDDSYTKAQVLRMEQVILKILSFDLCTPTAYVFINTYAVLCDMPEKLKYMTLYISELSLMEGETYLQYLPSLMSSASVALARHILGMEMWTPRLEEITTYKLEDLKTVVLHLCHTHKTAKELNTQAMREKYNRDTYKKVAMMESVEMSKDDFDQLCEAYNCKQKEDEHQQPDINTKSNVNLFYKF.

Positions 1–21 (MASFQIHQDMSNKENPGIKIP) are disordered. The 127-residue stretch at 206 to 332 (DILEYFRESE…ILKILSFDLC (127 aa)) folds into the Cyclin N-terminal domain.

Belongs to the cyclin family. Cyclin AB subfamily. As to quaternary structure, component of the Frs-CycA-Cdk1 complex composed of CycA, Cdk1 and Z600. Interacts (via C-terminus) with Z600. Interacts with otu and (via C-terminus) with bam; the interaction stabilizes CycA by negatively regulating its ubiquitination. Post-translationally, ubiquitinated. Ubiquitination state is negatively regulated by a deubiquitinase complex made up of bam and otu.

In terms of biological role, essential for the control of the cell cycle at the G2/M (mitosis) transition. Interacts with the Cdk1 and Cdk2 protein kinases to form MPF. G2/M cyclins accumulate steadily during G2 and are abruptly destroyed at mitosis. The protein is G2/mitotic-specific cyclin-A (CycA) of Drosophila melanogaster (Fruit fly).